Consider the following 427-residue polypeptide: Diaminobutyrate--2-oxoglutarate transaminase (427 aa).

Lys269 is modified (N6-(pyridoxal phosphate)lysine).

This sequence belongs to the class-III pyridoxal-phosphate-dependent aminotransferase family. Pyridoxal 5'-phosphate is required as a cofactor.

The catalysed reaction is L-2,4-diaminobutanoate + 2-oxoglutarate = L-aspartate 4-semialdehyde + L-glutamate. Its pathway is amine and polyamine biosynthesis; ectoine biosynthesis; L-ectoine from L-aspartate 4-semialdehyde: step 1/3. Catalyzes reversively the conversion of L-aspartate beta-semialdehyde (ASA) to L-2,4-diaminobutyrate (DABA) by transamination with L-glutamate. The protein is Diaminobutyrate--2-oxoglutarate transaminase (ectB) of Marinococcus halophilus.